The following is a 456-amino-acid chain: Exodeoxyribonuclease 7 large subunit (456 aa).

The protein belongs to the XseA family. In terms of assembly, heterooligomer composed of large and small subunits.

The protein localises to the cytoplasm. It catalyses the reaction Exonucleolytic cleavage in either 5'- to 3'- or 3'- to 5'-direction to yield nucleoside 5'-phosphates.. Functionally, bidirectionally degrades single-stranded DNA into large acid-insoluble oligonucleotides, which are then degraded further into small acid-soluble oligonucleotides. The chain is Exodeoxyribonuclease 7 large subunit from Shigella flexneri serotype 5b (strain 8401).